Consider the following 382-residue polypeptide: Dual-specificity RNA methyltransferase RlmN (382 aa).

The Proton acceptor role is filled by Glu-96. The 241-residue stretch at 102-342 (QGKRGTLCVS…VRTTRGEDID (241 aa)) folds into the Radical SAM core domain. The cysteines at positions 109 and 345 are disulfide-linked. [4Fe-4S] cluster contacts are provided by Cys-116, Cys-120, and Cys-123. S-adenosyl-L-methionine contacts are provided by residues 170–171 (GE), Ser-202, 224–226 (SLH), and Asn-302. Cys-345 serves as the catalytic S-methylcysteine intermediate.

Belongs to the radical SAM superfamily. RlmN family. It depends on [4Fe-4S] cluster as a cofactor.

The protein resides in the cytoplasm. The catalysed reaction is adenosine(2503) in 23S rRNA + 2 reduced [2Fe-2S]-[ferredoxin] + 2 S-adenosyl-L-methionine = 2-methyladenosine(2503) in 23S rRNA + 5'-deoxyadenosine + L-methionine + 2 oxidized [2Fe-2S]-[ferredoxin] + S-adenosyl-L-homocysteine. It catalyses the reaction adenosine(37) in tRNA + 2 reduced [2Fe-2S]-[ferredoxin] + 2 S-adenosyl-L-methionine = 2-methyladenosine(37) in tRNA + 5'-deoxyadenosine + L-methionine + 2 oxidized [2Fe-2S]-[ferredoxin] + S-adenosyl-L-homocysteine. Specifically methylates position 2 of adenine 2503 in 23S rRNA and position 2 of adenine 37 in tRNAs. m2A2503 modification seems to play a crucial role in the proofreading step occurring at the peptidyl transferase center and thus would serve to optimize ribosomal fidelity. This Pseudomonas fluorescens (strain Pf0-1) protein is Dual-specificity RNA methyltransferase RlmN.